The sequence spans 581 residues: Penicillin-binding protein activator LpoA (581 aa).

Positions 1-26 (MLSILMQGLRLKKCFLPILVMFFLAG) are cleaved as a signal peptide. C27 carries the N-palmitoyl cysteine lipid modification. A lipid anchor (S-diacylglycerol cysteine) is attached at C27.

The protein belongs to the LpoA family. As to quaternary structure, interacts with PBP1a.

It is found in the cell outer membrane. Regulator of peptidoglycan synthesis that is essential for the function of penicillin-binding protein 1A (PBP1a). The sequence is that of Penicillin-binding protein activator LpoA from Histophilus somni (strain 129Pt) (Haemophilus somnus).